We begin with the raw amino-acid sequence, 571 residues long: Urease subunit alpha (571 aa).

The Urease domain maps to 132–571; that stretch reads GGIDAHIHFI…VALAQRYFLF (440 aa). The Ni(2+) site is built by histidine 137, histidine 139, and lysine 220. Lysine 220 carries the N6-carboxylysine modification. Position 222 (histidine 222) interacts with substrate. 2 residues coordinate Ni(2+): histidine 249 and histidine 275. Residue histidine 323 is the Proton donor of the active site. Position 363 (aspartate 363) interacts with Ni(2+).

This sequence belongs to the metallo-dependent hydrolases superfamily. Urease alpha subunit family. Heterotrimer of UreA (gamma), UreB (beta) and UreC (alpha) subunits. Three heterotrimers associate to form the active enzyme. Ni cation is required as a cofactor. Post-translationally, carboxylation allows a single lysine to coordinate two nickel ions.

The protein resides in the cytoplasm. It catalyses the reaction urea + 2 H2O + H(+) = hydrogencarbonate + 2 NH4(+). It participates in nitrogen metabolism; urea degradation; CO(2) and NH(3) from urea (urease route): step 1/1. This is Urease subunit alpha from Halalkalibacterium halodurans (strain ATCC BAA-125 / DSM 18197 / FERM 7344 / JCM 9153 / C-125) (Bacillus halodurans).